We begin with the raw amino-acid sequence, 764 residues long: Irregular chiasm C-roughest protein (764 aa).

The first 19 residues, Met-1 to Ser-19, serve as a signal peptide directing secretion. The Extracellular segment spans residues Ser-20 to Met-533. Ig-like C2-type domains are found at residues Pro-21–Arg-120, Pro-132–Arg-230, Pro-237–Ser-343, Pro-346–Ser-419, and Pro-430–Ser-530. Disulfide bonds link Cys-49–Cys-107, Cys-155–Cys-214, Cys-281–Cys-325, Cys-367–Cys-408, and Cys-450–Cys-508. N-linked (GlcNAc...) asparagine glycans are attached at residues Asn-211, Asn-313, Asn-393, Asn-400, and Asn-507. The chain crosses the membrane as a helical span at residues Thr-534 to Ile-556. The Cytoplasmic segment spans residues Lys-557–Val-764. Disordered regions lie at residues His-640–Gln-660 and Asn-691–Ala-719. Positions Gly-692–Ala-701 are enriched in polar residues. The span at Ser-702–Ala-719 shows a compositional bias: low complexity.

As to expression, postembryonic expression is strong in the developing optic lobe and in the eye imaginal disk.

Its subcellular location is the membrane. In terms of biological role, required for correct axonal pathway formation in the optic lobe and for programmed cell death in the developing retina. The sequence is that of Irregular chiasm C-roughest protein (rst) from Drosophila melanogaster (Fruit fly).